The sequence spans 419 residues: Putative trans-acting enoyl reductase MT2525 (419 aa).

Lys127 is covalently cross-linked (Isoglutamyl lysine isopeptide (Lys-Gln) (interchain with Q-Cter in protein Pup)). The interval 197–232 (NDPDARRQLSDPYMLSPDRGAEPELGPQPDLPSRRG) is disordered. The chain crosses the membrane as a helical span at residues 284–304 (VLAPVVSVVGGGVGNAMFGLA).

It belongs to the saccharopine dehydrogenase family. Enoyl reductase subfamily.

It localises to the cell membrane. The polypeptide is Putative trans-acting enoyl reductase MT2525 (Mycobacterium tuberculosis (strain CDC 1551 / Oshkosh)).